The chain runs to 214 residues: Phosphatidylserine decarboxylase proenzyme (214 aa).

Serine 183 (schiff-base intermediate with substrate; via pyruvic acid) is an active-site residue. At serine 183 the chain carries Pyruvic acid (Ser); by autocatalysis.

It belongs to the phosphatidylserine decarboxylase family. PSD-A subfamily. As to quaternary structure, heterodimer of a large membrane-associated beta subunit and a small pyruvoyl-containing alpha subunit. Pyruvate is required as a cofactor. Post-translationally, is synthesized initially as an inactive proenzyme. Formation of the active enzyme involves a self-maturation process in which the active site pyruvoyl group is generated from an internal serine residue via an autocatalytic post-translational modification. Two non-identical subunits are generated from the proenzyme in this reaction, and the pyruvate is formed at the N-terminus of the alpha chain, which is derived from the carboxyl end of the proenzyme. The post-translation cleavage follows an unusual pathway, termed non-hydrolytic serinolysis, in which the side chain hydroxyl group of the serine supplies its oxygen atom to form the C-terminus of the beta chain, while the remainder of the serine residue undergoes an oxidative deamination to produce ammonia and the pyruvoyl prosthetic group on the alpha chain.

Its subcellular location is the cell membrane. The catalysed reaction is a 1,2-diacyl-sn-glycero-3-phospho-L-serine + H(+) = a 1,2-diacyl-sn-glycero-3-phosphoethanolamine + CO2. It participates in phospholipid metabolism; phosphatidylethanolamine biosynthesis; phosphatidylethanolamine from CDP-diacylglycerol: step 2/2. Its function is as follows. Catalyzes the formation of phosphatidylethanolamine (PtdEtn) from phosphatidylserine (PtdSer). The polypeptide is Phosphatidylserine decarboxylase proenzyme (Chlorobaculum parvum (strain DSM 263 / NCIMB 8327) (Chlorobium vibrioforme subsp. thiosulfatophilum)).